A 377-amino-acid chain; its full sequence is Gastricsin (377 aa).

Positions 1-5 (QLLEA) are cleaved as a signal peptide. 2 consecutive propeptides (activation peptide) follow at residues 6-31 (AVVK…LGEF) and 32-48 (LRTH…FGDL). Residues 62–374 (YFGEISIGTP…DLSNNRVGFA (313 aa)) form the Peptidase A1 domain. The active site involves Asp-80. 2 disulfides stabilise this stretch: Cys-93–Cys-98 and Cys-256–Cys-260. Asp-265 is a catalytic residue. Cys-299 and Cys-332 are oxidised to a cystine.

The protein belongs to the peptidase A1 family. In terms of processing, each pepsinogen is converted to corresponding pepsin at pH 2.0 in part as a result of the release of a 47 AA activation segment and in part as a result of stepwise proteolytic cleavage via an intermediate form(s).

The protein resides in the secreted. It carries out the reaction More restricted specificity than pepsin A, but shows preferential cleavage at Tyr-|-Xaa bonds. High activity on hemoglobin.. Functionally, hydrolyzes a variety of proteins. The protein is Gastricsin (PGC) of Macaca fuscata fuscata (Japanese macaque).